We begin with the raw amino-acid sequence, 348 residues long: N-acetyl-gamma-glutamyl-phosphate reductase (348 aa).

Cysteine 150 is an active-site residue.

This sequence belongs to the NAGSA dehydrogenase family. Type 1 subfamily.

It localises to the cytoplasm. The enzyme catalyses N-acetyl-L-glutamate 5-semialdehyde + phosphate + NADP(+) = N-acetyl-L-glutamyl 5-phosphate + NADPH + H(+). It functions in the pathway amino-acid biosynthesis; L-arginine biosynthesis; N(2)-acetyl-L-ornithine from L-glutamate: step 3/4. Catalyzes the NADPH-dependent reduction of N-acetyl-5-glutamyl phosphate to yield N-acetyl-L-glutamate 5-semialdehyde. The chain is N-acetyl-gamma-glutamyl-phosphate reductase from Symbiobacterium thermophilum (strain DSM 24528 / JCM 14929 / IAM 14863 / T).